The sequence spans 183 residues: Probable chorismate pyruvate-lyase (183 aa).

Arginine 79, leucine 115, and glutamate 168 together coordinate substrate.

It belongs to the UbiC family.

It localises to the cytoplasm. The enzyme catalyses chorismate = 4-hydroxybenzoate + pyruvate. It participates in cofactor biosynthesis; ubiquinone biosynthesis. Its function is as follows. Removes the pyruvyl group from chorismate, with concomitant aromatization of the ring, to provide 4-hydroxybenzoate (4HB) for the ubiquinone pathway. This is Probable chorismate pyruvate-lyase from Chromohalobacter salexigens (strain ATCC BAA-138 / DSM 3043 / CIP 106854 / NCIMB 13768 / 1H11).